The following is a 180-amino-acid chain: Putative manganese efflux pump MntP (180 aa).

Transmembrane regions (helical) follow at residues 6–26 (LMAL…GIGL), 34–54 (ILQI…TGWL), 67–87 (AAVI…WAAW), 102–122 (FWGL…AGFT), 131–151 (LLAA…GLVF), and 160–180 (GERA…KLFF).

It belongs to the MntP (TC 9.B.29) family.

The protein localises to the cell membrane. Functionally, probably functions as a manganese efflux pump. The polypeptide is Putative manganese efflux pump MntP (Pelotomaculum thermopropionicum (strain DSM 13744 / JCM 10971 / SI)).